A 141-amino-acid chain; its full sequence is Cytochrome c-type biogenesis protein CcmE (141 aa).

The Cytoplasmic segment spans residues 1 to 7; that stretch reads MRARTRR. The helical; Signal-anchor for type II membrane protein transmembrane segment at 8-28 threads the bilayer; the sequence is LYTFGIAAALIVAAAALAFFA. Residues 29–141 are Periplasmic-facing; the sequence is LRENANLFYT…RELKPLEAGG (113 aa). The heme site is built by His125 and Tyr129.

It belongs to the CcmE/CycJ family.

It is found in the cell inner membrane. Functionally, heme chaperone required for the biogenesis of c-type cytochromes. Transiently binds heme delivered by CcmC and transfers the heme to apo-cytochromes in a process facilitated by CcmF and CcmH. This Hyphomonas neptunium (strain ATCC 15444) protein is Cytochrome c-type biogenesis protein CcmE.